Here is a 309-residue protein sequence, read N- to C-terminus: Testis-expressed protein 264 homolog (309 aa).

The Lumenal segment spans residues 1-3; sequence MPD. Residues 4 to 24 form a helical; Signal-anchor for type III membrane protein membrane-spanning segment; sequence LLLLGLIGALTLLLLLTLLAF. Topologically, residues 25–309 are cytoplasmic; sequence AGYSGLLTGV…ELSTPERGEE (285 aa). The interval 193-309 is disordered; it reads PEVKETERKC…ELSTPERGEE (117 aa). The span at 208-225 shows a compositional bias: low complexity; sequence ATDTQTDGTGADTSDASS. Phosphoserine occurs at positions 238 and 243. Residues 250–262 show a composition bias toward basic and acidic residues; it reads GWDDGDNRSEHSY. The span at 263-272 shows a compositional bias: low complexity; that stretch reads SESGASGSSF. The short motif at 272–275 is the LIR motif element; sequence FEEL.

In terms of assembly, interacts (via the LIR motif) with ATG8 family proteins MAP1LC3A, MAP1LC3B, GABARAP and GABARAPL1. Interacts with VCP/p97; bridging VCP/p97 to covalent DNA-protein cross-links (DPCs). Interacts with TOP1 (when sumoylated).

Its subcellular location is the endoplasmic reticulum membrane. It is found in the cytoplasmic vesicle. It localises to the autophagosome. The protein resides in the cytoplasm. The protein localises to the cytosol. Its subcellular location is the nucleus. It is found in the chromosome. Major reticulophagy (also called ER-phagy) receptor that acts independently of other candidate reticulophagy receptors to remodel subdomains of the endoplasmic reticulum into autophagosomes upon nutrient stress, which then fuse with lysosomes for endoplasmic reticulum turnover. The ATG8-containing isolation membrane (IM) cradles a tubular segment of TEX264-positive ER near a three-way junction, allowing the formation of a synapse of 2 juxtaposed membranes with trans interaction between the TEX264 and ATG8 proteins. Expansion of the IM would extend the capture of ER, possibly through a 'zipper-like' process involving continued trans TEX264-ATG8 interactions, until poorly understood mechanisms lead to the fission of relevant membranes and, ultimately, autophagosomal membrane closure. Also involved in the repair of covalent DNA-protein cross-links (DPCs) during DNA synthesis: acts by bridging VCP/p97 to covalent DNA-protein cross-links (DPCs) and initiating resolution of DPCs by SPRTN. This Mus musculus (Mouse) protein is Testis-expressed protein 264 homolog.